Reading from the N-terminus, the 84-residue chain is Sec-independent protein translocase protein TatA (84 aa).

A helical transmembrane segment spans residues methionine 1–glycine 21. The span at glutamate 42–glutamate 57 shows a compositional bias: basic and acidic residues. The segment at glutamate 42–alanine 84 is disordered. Residues threonine 62–glutamate 77 are compositionally biased toward polar residues.

It belongs to the TatA/E family. The Tat system comprises two distinct complexes: a TatABC complex, containing multiple copies of TatA, TatB and TatC subunits, and a separate TatA complex, containing only TatA subunits. Substrates initially bind to the TatABC complex, which probably triggers association of the separate TatA complex to form the active translocon.

The protein resides in the cell membrane. Its function is as follows. Part of the twin-arginine translocation (Tat) system that transports large folded proteins containing a characteristic twin-arginine motif in their signal peptide across membranes. TatA could form the protein-conducting channel of the Tat system. The protein is Sec-independent protein translocase protein TatA of Corynebacterium jeikeium (strain K411).